The primary structure comprises 245 residues: 1-(5-phosphoribosyl)-5-[(5-phosphoribosylamino)methylideneamino] imidazole-4-carboxamide isomerase (245 aa).

D7 serves as the catalytic Proton acceptor. Residue D129 is the Proton donor of the active site.

The protein belongs to the HisA/HisF family.

The protein resides in the cytoplasm. It carries out the reaction 1-(5-phospho-beta-D-ribosyl)-5-[(5-phospho-beta-D-ribosylamino)methylideneamino]imidazole-4-carboxamide = 5-[(5-phospho-1-deoxy-D-ribulos-1-ylimino)methylamino]-1-(5-phospho-beta-D-ribosyl)imidazole-4-carboxamide. It functions in the pathway amino-acid biosynthesis; L-histidine biosynthesis; L-histidine from 5-phospho-alpha-D-ribose 1-diphosphate: step 4/9. The sequence is that of 1-(5-phosphoribosyl)-5-[(5-phosphoribosylamino)methylideneamino] imidazole-4-carboxamide isomerase from Serratia proteamaculans (strain 568).